Reading from the N-terminus, the 269-residue chain is Meiotic drive suppressor wtf5 (269 aa).

Residues 1-65 form a disordered region; sequence MKNNYTSLKS…NTHRENHSYG (65 aa). A compositionally biased stretch (basic and acidic residues) spans 19–30; the sequence is KTDHEIDLEKGP. The next 3 membrane-spanning stretches (helical) occupy residues 73 to 95, 110 to 132, and 206 to 228; these read LLII…VCYL, WTLF…YFYE, and WGLK…VFIA.

This sequence belongs to the WTF family. Homomer. Interacts with other proteins that exhibit high sequence similarity.

It is found in the spore membrane. The protein resides in the vacuole membrane. Functionally, acts as a suppressor component of the dual wtf meiotic drive system, and can suppress but not confer meiotic drive by compatible poisons. Wtf meiotic drive systems promote unequal transmission of alleles from the parental zygote to progeny spores by encoding a poison and an antidote from the same locus; the poison is trans-acting and forms toxic aggregates in all spores within an ascus, wherease the antidote is spore-specific and targets aggregates for degradation by the vacuole. Meiotic drive by wtf systems therefore lead to poisoning of all progeny that do not inherit the dual poison/antidote allele, or express a compatible antidote. This chain is Meiotic drive suppressor wtf5, found in Schizosaccharomyces pombe (strain 972 / ATCC 24843) (Fission yeast).